The sequence spans 84 residues: MAHKKAGGSTRNGRDSESKRLGVKRFGGESVLAGNIIVRQRGTKFHAGVNVGIGRDHTLFALTDGKVKFEVKGANNRKFISIEA.

Residues 1-22 are disordered; it reads MAHKKAGGSTRNGRDSESKRLG.

Belongs to the bacterial ribosomal protein bL27 family.

This Shewanella baltica (strain OS223) protein is Large ribosomal subunit protein bL27.